Here is a 170-residue protein sequence, read N- to C-terminus: NADH-quinone oxidoreductase subunit B (170 aa).

4 residues coordinate [4Fe-4S] cluster: Cys-37, Cys-38, Cys-102, and Cys-131.

Belongs to the complex I 20 kDa subunit family. In terms of assembly, NDH-1 is composed of 14 different subunits. Subunits NuoB, C, D, E, F, and G constitute the peripheral sector of the complex. [4Fe-4S] cluster is required as a cofactor.

Its subcellular location is the cell inner membrane. It catalyses the reaction a quinone + NADH + 5 H(+)(in) = a quinol + NAD(+) + 4 H(+)(out). NDH-1 shuttles electrons from NADH, via FMN and iron-sulfur (Fe-S) centers, to quinones in the respiratory chain. The immediate electron acceptor for the enzyme in this species is believed to be ubiquinone. Couples the redox reaction to proton translocation (for every two electrons transferred, four hydrogen ions are translocated across the cytoplasmic membrane), and thus conserves the redox energy in a proton gradient. The polypeptide is NADH-quinone oxidoreductase subunit B (Geobacter metallireducens (strain ATCC 53774 / DSM 7210 / GS-15)).